Reading from the N-terminus, the 773-residue chain is DNA gyrase subunit B (773 aa).

The Toprim domain maps to 416–530 (SEIFLVEGDS…QGHVYIAQAP (115 aa)). Residues E422, D495, and D497 each contribute to the Mg(2+) site.

It belongs to the type II topoisomerase GyrB family. In terms of assembly, heterotetramer, composed of two GyrA and two GyrB chains. In the heterotetramer, GyrA contains the active site tyrosine that forms a transient covalent intermediate with DNA, while GyrB binds cofactors and catalyzes ATP hydrolysis. The cofactor is Mg(2+). Mn(2+) is required as a cofactor. It depends on Ca(2+) as a cofactor.

Its subcellular location is the cytoplasm. It carries out the reaction ATP-dependent breakage, passage and rejoining of double-stranded DNA.. Its function is as follows. A type II topoisomerase that negatively supercoils closed circular double-stranded (ds) DNA in an ATP-dependent manner to modulate DNA topology and maintain chromosomes in an underwound state. Negative supercoiling favors strand separation, and DNA replication, transcription, recombination and repair, all of which involve strand separation. Also able to catalyze the interconversion of other topological isomers of dsDNA rings, including catenanes and knotted rings. Type II topoisomerases break and join 2 DNA strands simultaneously in an ATP-dependent manner. This chain is DNA gyrase subunit B, found in Helicobacter pylori (strain ATCC 700392 / 26695) (Campylobacter pylori).